Reading from the N-terminus, the 169-residue chain is Nascent polypeptide-associated complex subunit alpha (169 aa).

Positions 14–78 (NKNEKKAREM…AKIDNFSQKL (65 aa)) constitute an NAC-A/B domain. Residues 85–128 (IQSVSKSPEEIQKDMQLAADQAGDESAKPAAAAEEDDEAPVDAG) are disordered. In terms of domain architecture, UBA spans 130–169 (LSAEDIELVASQANVSKNKAIKALKEHNGDIVNAIMALSK).

This sequence belongs to the NAC-alpha family. As to quaternary structure, part of the nascent polypeptide-associated complex (NAC), consisting of EGD2 and EGD1. NAC associates with ribosomes via EGD1.

The protein resides in the cytoplasm. It localises to the nucleus. In terms of biological role, component of the nascent polypeptide-associated complex (NAC), a dynamic component of the ribosomal exit tunnel, protecting the emerging polypeptides from interaction with other cytoplasmic proteins to ensure appropriate nascent protein targeting. The NAC complex also promotes mitochondrial protein import by enhancing productive ribosome interactions with the outer mitochondrial membrane and blocks the inappropriate interaction of ribosomes translating non-secretory nascent polypeptides with translocation sites in the membrane of the endoplasmic reticulum. EGD2 may also be involved in transcription regulation. The polypeptide is Nascent polypeptide-associated complex subunit alpha (EGD2) (Vanderwaltozyma polyspora (strain ATCC 22028 / DSM 70294 / BCRC 21397 / CBS 2163 / NBRC 10782 / NRRL Y-8283 / UCD 57-17) (Kluyveromyces polysporus)).